The following is a 146-amino-acid chain: Urease accessory protein UreE 1 (146 aa).

Belongs to the UreE family.

The protein resides in the cytoplasm. Its function is as follows. Involved in urease metallocenter assembly. Binds nickel. Probably functions as a nickel donor during metallocenter assembly. In Pseudomonas syringae pv. syringae (strain B728a), this protein is Urease accessory protein UreE 1.